Reading from the N-terminus, the 206-residue chain is Guanylate kinase (206 aa).

A Guanylate kinase-like domain is found at 6–184 (GNLFILSAPS…ALTDIETIVM (179 aa)). 13-20 (APSGAGKS) is a binding site for ATP.

Belongs to the guanylate kinase family.

It localises to the cytoplasm. It carries out the reaction GMP + ATP = GDP + ADP. Functionally, essential for recycling GMP and indirectly, cGMP. This chain is Guanylate kinase, found in Pseudoalteromonas translucida (strain TAC 125).